We begin with the raw amino-acid sequence, 356 residues long: MSLLSDLINLNLSESSEKIIAEYIWVGGSGMDLRSKARTLPGPVSDPAKLPKWNYDGSSTNQAPGQDSEVILYPQAIFKDPFRQGNNILVICDVYTPAGEPLPTNKRHNAAKIFSHPDVAAEVPWYGIEQEYTLLQKDTNWPLGWPIGGFPGPQGPYYCGIGADKAYGRDIVDAHYKACLYAGINISGINGEVMPGQWEFQVGPSVGISAGDEIWAARYILERITEIAGVVVSFDPKPIPGDWNGAGAHTNYSTKSMREDGGYEIIKKAIEKLGLRHKEHIAAYGEGNERRLTGKHETTDINTFSWGVANRGASVRVGRDTEKDGKGYFEDRRPSSNMDPYVVTSMIAETTLLWKP.

A GS beta-grasp domain is found at 19-99; sequence IIAEYIWVGG…VICDVYTPAG (81 aa). In terms of domain architecture, GS catalytic spans 106-356; that stretch reads KRHNAAKIFS…IAETTLLWKP (251 aa).

It belongs to the glutamine synthetase family. Homooctamer. Found at highest levels in root nodules.

It is found in the cytoplasm. The catalysed reaction is L-glutamate + NH4(+) + ATP = L-glutamine + ADP + phosphate + H(+). The protein is Glutamine synthetase nodule isozyme (GS1) of Medicago sativa (Alfalfa).